The sequence spans 142 residues: Large ribosomal subunit protein uL11 (142 aa).

This sequence belongs to the universal ribosomal protein uL11 family. In terms of assembly, part of the ribosomal stalk of the 50S ribosomal subunit. Interacts with L10 and the large rRNA to form the base of the stalk. L10 forms an elongated spine to which L12 dimers bind in a sequential fashion forming a multimeric L10(L12)X complex. Post-translationally, one or more lysine residues are methylated.

Functionally, forms part of the ribosomal stalk which helps the ribosome interact with GTP-bound translation factors. The protein is Large ribosomal subunit protein uL11 of Shewanella amazonensis (strain ATCC BAA-1098 / SB2B).